A 136-amino-acid chain; its full sequence is DNA-directed RNA polymerase subunit omega (136 aa).

Over residues 90-102 (SSPAAAAVAPQSS) the composition is skewed to low complexity. The tract at residues 90-136 (SSPAAAAVAPQSSSDDKDVQFDRMSEEDLLRGLENLAPPTETDDEGE) is disordered. Residues 103 to 120 (SDDKDVQFDRMSEEDLLR) show a composition bias toward basic and acidic residues.

Belongs to the RNA polymerase subunit omega family. As to quaternary structure, the RNAP catalytic core consists of 2 alpha, 1 beta, 1 beta' and 1 omega subunit. When a sigma factor is associated with the core the holoenzyme is formed, which can initiate transcription.

The enzyme catalyses RNA(n) + a ribonucleoside 5'-triphosphate = RNA(n+1) + diphosphate. Promotes RNA polymerase assembly. Latches the N- and C-terminal regions of the beta' subunit thereby facilitating its interaction with the beta and alpha subunits. The sequence is that of DNA-directed RNA polymerase subunit omega from Methylorubrum populi (strain ATCC BAA-705 / NCIMB 13946 / BJ001) (Methylobacterium populi).